A 119-amino-acid polypeptide reads, in one-letter code: Large ribosomal subunit protein bL20 (119 aa).

It belongs to the bacterial ribosomal protein bL20 family.

In terms of biological role, binds directly to 23S ribosomal RNA and is necessary for the in vitro assembly process of the 50S ribosomal subunit. It is not involved in the protein synthesizing functions of that subunit. In Halorhodospira halophila (strain DSM 244 / SL1) (Ectothiorhodospira halophila (strain DSM 244 / SL1)), this protein is Large ribosomal subunit protein bL20.